A 486-amino-acid polypeptide reads, in one-letter code: Aspartyl/glutamyl-tRNA(Asn/Gln) amidotransferase subunit B (486 aa).

The protein belongs to the GatB/GatE family. GatB subfamily. Heterotrimer of A, B and C subunits.

The catalysed reaction is L-glutamyl-tRNA(Gln) + L-glutamine + ATP + H2O = L-glutaminyl-tRNA(Gln) + L-glutamate + ADP + phosphate + H(+). The enzyme catalyses L-aspartyl-tRNA(Asn) + L-glutamine + ATP + H2O = L-asparaginyl-tRNA(Asn) + L-glutamate + ADP + phosphate + 2 H(+). Its function is as follows. Allows the formation of correctly charged Asn-tRNA(Asn) or Gln-tRNA(Gln) through the transamidation of misacylated Asp-tRNA(Asn) or Glu-tRNA(Gln) in organisms which lack either or both of asparaginyl-tRNA or glutaminyl-tRNA synthetases. The reaction takes place in the presence of glutamine and ATP through an activated phospho-Asp-tRNA(Asn) or phospho-Glu-tRNA(Gln). The polypeptide is Aspartyl/glutamyl-tRNA(Asn/Gln) amidotransferase subunit B (Orientia tsutsugamushi (strain Boryong) (Rickettsia tsutsugamushi)).